The primary structure comprises 211 residues: MGKRWQAERKRDHYYRSAKKENYRSRASYKLLQLNNKYKLIKKGDRVLDLGAAPGGWSQVALDKVGEEGLVVAVDLQRIKGFPAENFRAIRGDFTDPEVKDKIIRELGGRADVVISDAAPSLSGIRDIDHLRSVDLVENVLDIAYRVLDRKGNILIKAFQGPELDRVIKELRKDFWKLKTTKPASSRKASAEMYIVGRDFKGKEKWERIIH.

S-adenosyl-L-methionine is bound by residues Gly55, Trp57, Asp75, Asp93, and Asp117. The active-site Proton acceptor is Lys157.

The protein belongs to the class I-like SAM-binding methyltransferase superfamily. RNA methyltransferase RlmE family.

The protein resides in the cytoplasm. The catalysed reaction is uridine(2552) in 23S rRNA + S-adenosyl-L-methionine = 2'-O-methyluridine(2552) in 23S rRNA + S-adenosyl-L-homocysteine + H(+). Its function is as follows. Specifically methylates the uridine in position 2552 of 23S rRNA at the 2'-O position of the ribose in the fully assembled 50S ribosomal subunit. This is Ribosomal RNA large subunit methyltransferase E from Methanothermobacter thermautotrophicus (strain ATCC 29096 / DSM 1053 / JCM 10044 / NBRC 100330 / Delta H) (Methanobacterium thermoautotrophicum).